The sequence spans 349 residues: Nicotinate-nucleotide--dimethylbenzimidazole phosphoribosyltransferase (349 aa).

The active-site Proton acceptor is the glutamate 318.

This sequence belongs to the CobT family.

It carries out the reaction 5,6-dimethylbenzimidazole + nicotinate beta-D-ribonucleotide = alpha-ribazole 5'-phosphate + nicotinate + H(+). The protein operates within nucleoside biosynthesis; alpha-ribazole biosynthesis; alpha-ribazole from 5,6-dimethylbenzimidazole: step 1/2. Catalyzes the synthesis of alpha-ribazole-5'-phosphate from nicotinate mononucleotide (NAMN) and 5,6-dimethylbenzimidazole (DMB). This is Nicotinate-nucleotide--dimethylbenzimidazole phosphoribosyltransferase from Geobacter sp. (strain M21).